The primary structure comprises 299 residues: Regucalcin (299 aa).

Position 18 (E18) interacts with a divalent metal cation. R101, N103, and E121 together coordinate substrate. K144 carries the post-translational modification N6-succinyllysine. 2 residues coordinate a divalent metal cation: N154 and D204. The active-site Proton donor/acceptor is the D204. 2 positions are modified to N6-succinyllysine: K244 and K253.

It belongs to the SMP-30/CGR1 family. As to quaternary structure, monomer. Zn(2+) is required as a cofactor. Mn(2+) serves as cofactor. Requires Ca(2+) as cofactor. The cofactor is Mg(2+).

The protein localises to the cytoplasm. The catalysed reaction is D-glucono-1,5-lactone + H2O = D-gluconate + H(+). Its function is as follows. Gluconolactonase with low activity towards other sugar lactones, including gulonolactone and galactonolactone. Can also hydrolyze diisopropyl phosphorofluoridate and phenylacetate (in vitro). Calcium-binding protein. Modulates Ca(2+) signaling, and Ca(2+)-dependent cellular processes and enzyme activities. The chain is Regucalcin (RGN) from Homo sapiens (Human).